The primary structure comprises 232 residues: MADDRLIVALDVPNVVQGLDLAERLGDAVSFYKIGLGMLTGGGLALANELKQERGKRIFLDMKLFDIGATVEAAVRGFASYDLDFLTVHGDPQVVRAAVQGASGSGLRILAVTVLTSLDRADLDANMIRAGDLAEITLERAARALDAGAHGVIASPQEAAAIRALPQAAGRLIVTPGVRPTGAALGDQKRVATPARAIADGADHIVVGRPIWQAGDPRAAALAVQAELPTRG.

Residues Asp11, Lys33, 61-70 (DMKLFDIGAT), Thr116, Arg179, Gln188, Gly208, and Arg209 contribute to the substrate site. The active-site Proton donor is Lys63.

This sequence belongs to the OMP decarboxylase family. Type 1 subfamily. As to quaternary structure, homodimer.

The enzyme catalyses orotidine 5'-phosphate + H(+) = UMP + CO2. It functions in the pathway pyrimidine metabolism; UMP biosynthesis via de novo pathway; UMP from orotate: step 2/2. In terms of biological role, catalyzes the decarboxylation of orotidine 5'-monophosphate (OMP) to uridine 5'-monophosphate (UMP). The chain is Orotidine 5'-phosphate decarboxylase from Cereibacter sphaeroides (strain ATCC 17023 / DSM 158 / JCM 6121 / CCUG 31486 / LMG 2827 / NBRC 12203 / NCIMB 8253 / ATH 2.4.1.) (Rhodobacter sphaeroides).